The chain runs to 365 residues: Phospho-N-acetylmuramoyl-pentapeptide-transferase (365 aa).

Transmembrane regions (helical) follow at residues 22 to 42 (YISV…LALG), 74 to 94 (TMGG…WGDL), 95 to 115 (TSIY…IGFF), 133 to 153 (YKFA…FYLL), 168 to 188 (SLYI…IING), 201 to 221 (GLAI…AYIE), 240 to 260 (LAEV…FLWF), 267 to 287 (VFMG…IAVM), 292 to 312 (LIFF…MLQV), and 342 to 362 (KVVI…LAAI).

Belongs to the glycosyltransferase 4 family. MraY subfamily. Mg(2+) is required as a cofactor.

The protein localises to the cell inner membrane. The catalysed reaction is UDP-N-acetyl-alpha-D-muramoyl-L-alanyl-gamma-D-glutamyl-meso-2,6-diaminopimeloyl-D-alanyl-D-alanine + di-trans,octa-cis-undecaprenyl phosphate = di-trans,octa-cis-undecaprenyl diphospho-N-acetyl-alpha-D-muramoyl-L-alanyl-D-glutamyl-meso-2,6-diaminopimeloyl-D-alanyl-D-alanine + UMP. Its pathway is cell wall biogenesis; peptidoglycan biosynthesis. Catalyzes the initial step of the lipid cycle reactions in the biosynthesis of the cell wall peptidoglycan: transfers peptidoglycan precursor phospho-MurNAc-pentapeptide from UDP-MurNAc-pentapeptide onto the lipid carrier undecaprenyl phosphate, yielding undecaprenyl-pyrophosphoryl-MurNAc-pentapeptide, known as lipid I. The protein is Phospho-N-acetylmuramoyl-pentapeptide-transferase of Francisella tularensis subsp. tularensis (strain FSC 198).